A 503-amino-acid polypeptide reads, in one-letter code: Glycerol kinase (503 aa).

ADP is bound at residue Thr-14. ATP-binding residues include Thr-14, Thr-15, and Ser-16. Thr-14 provides a ligand contact to sn-glycerol 3-phosphate. Arg-18 provides a ligand contact to ADP. Arg-84, Glu-85, Tyr-136, and Asp-246 together coordinate sn-glycerol 3-phosphate. 5 residues coordinate glycerol: Arg-84, Glu-85, Tyr-136, Asp-246, and Gln-247. 2 residues coordinate ADP: Thr-268 and Gly-311. Residues Thr-268, Gly-311, Gln-315, and Gly-412 each coordinate ATP. 2 residues coordinate ADP: Gly-412 and Asn-416.

This sequence belongs to the FGGY kinase family.

It carries out the reaction glycerol + ATP = sn-glycerol 3-phosphate + ADP + H(+). It participates in polyol metabolism; glycerol degradation via glycerol kinase pathway; sn-glycerol 3-phosphate from glycerol: step 1/1. With respect to regulation, inhibited by fructose 1,6-bisphosphate (FBP). Its function is as follows. Key enzyme in the regulation of glycerol uptake and metabolism. Catalyzes the phosphorylation of glycerol to yield sn-glycerol 3-phosphate. This chain is Glycerol kinase, found in Haemophilus influenzae (strain 86-028NP).